The sequence spans 339 residues: Glycerol-3-phosphate dehydrogenase [NAD(P)+] (339 aa).

4 residues coordinate NADPH: Ser15, Tyr16, His36, and Lys110. Sn-glycerol 3-phosphate-binding residues include Lys110, Gly139, and Thr141. Ala143 lines the NADPH pocket. The sn-glycerol 3-phosphate site is built by Lys195, Asp248, Ser258, Arg259, and Asn260. Residue Lys195 is the Proton acceptor of the active site. Residue Arg259 participates in NADPH binding. NADPH-binding residues include Val283 and Glu285.

Belongs to the NAD-dependent glycerol-3-phosphate dehydrogenase family.

The protein resides in the cytoplasm. The catalysed reaction is sn-glycerol 3-phosphate + NAD(+) = dihydroxyacetone phosphate + NADH + H(+). The enzyme catalyses sn-glycerol 3-phosphate + NADP(+) = dihydroxyacetone phosphate + NADPH + H(+). It functions in the pathway membrane lipid metabolism; glycerophospholipid metabolism. In terms of biological role, catalyzes the reduction of the glycolytic intermediate dihydroxyacetone phosphate (DHAP) to sn-glycerol 3-phosphate (G3P), the key precursor for phospholipid synthesis. This is Glycerol-3-phosphate dehydrogenase [NAD(P)+] from Pectobacterium atrosepticum (strain SCRI 1043 / ATCC BAA-672) (Erwinia carotovora subsp. atroseptica).